The chain runs to 245 residues: Octanoyltransferase (245 aa).

In terms of domain architecture, BPL/LPL catalytic spans 54-238 (GEATELVWLL…AFENIFGETR (185 aa)). Residues 92 to 99 (RGGQLTYH), 167 to 169 (AIG), and 180 to 182 (GIA) contribute to the substrate site. Catalysis depends on C198, which acts as the Acyl-thioester intermediate.

Belongs to the LipB family.

It localises to the cytoplasm. The enzyme catalyses octanoyl-[ACP] + L-lysyl-[protein] = N(6)-octanoyl-L-lysyl-[protein] + holo-[ACP] + H(+). It participates in protein modification; protein lipoylation via endogenous pathway; protein N(6)-(lipoyl)lysine from octanoyl-[acyl-carrier-protein]: step 1/2. Functionally, catalyzes the transfer of endogenously produced octanoic acid from octanoyl-acyl-carrier-protein onto the lipoyl domains of lipoate-dependent enzymes. Lipoyl-ACP can also act as a substrate although octanoyl-ACP is likely to be the physiological substrate. This is Octanoyltransferase from Rhodopseudomonas palustris (strain TIE-1).